Reading from the N-terminus, the 877-residue chain is Alanine--tRNA ligase (877 aa).

Positions 556, 560, 657, and 661 each coordinate Zn(2+).

The protein belongs to the class-II aminoacyl-tRNA synthetase family. Zn(2+) is required as a cofactor.

It is found in the cytoplasm. It carries out the reaction tRNA(Ala) + L-alanine + ATP = L-alanyl-tRNA(Ala) + AMP + diphosphate. In terms of biological role, catalyzes the attachment of alanine to tRNA(Ala) in a two-step reaction: alanine is first activated by ATP to form Ala-AMP and then transferred to the acceptor end of tRNA(Ala). Also edits incorrectly charged Ser-tRNA(Ala) and Gly-tRNA(Ala) via its editing domain. The chain is Alanine--tRNA ligase from Wolbachia pipientis wMel.